We begin with the raw amino-acid sequence, 146 residues long: uncharacterized protein (146 aa).

Residues 86 to 96 (EFDSPMDEEEE) are compositionally biased toward acidic residues. The interval 86–124 (EFDSPMDEEEETKPREASLDQTAPKKSKKEELLVKNNNF) is disordered.

This is an uncharacterized protein from Ostreid herpesvirus 1 (isolate France) (OsHV-1).